The sequence spans 469 residues: 3-isopropylmalate dehydratase large subunit (469 aa).

Residues cysteine 349, cysteine 410, and cysteine 413 each contribute to the [4Fe-4S] cluster site.

This sequence belongs to the aconitase/IPM isomerase family. LeuC type 1 subfamily. Heterodimer of LeuC and LeuD. The cofactor is [4Fe-4S] cluster.

It carries out the reaction (2R,3S)-3-isopropylmalate = (2S)-2-isopropylmalate. It functions in the pathway amino-acid biosynthesis; L-leucine biosynthesis; L-leucine from 3-methyl-2-oxobutanoate: step 2/4. Its function is as follows. Catalyzes the isomerization between 2-isopropylmalate and 3-isopropylmalate, via the formation of 2-isopropylmaleate. This chain is 3-isopropylmalate dehydratase large subunit, found in Neisseria meningitidis serogroup A / serotype 4A (strain DSM 15465 / Z2491).